Reading from the N-terminus, the 415-residue chain is Zona pellucida-like domain-containing protein 1 (415 aa).

Positions 1–19 (MEQIRLLLLLTIRVLSGSA) are cleaved as a signal peptide. Over 20–372 (QFNGYNCDAN…PPFQLNAITS (353 aa)) the chain is Extracellular. A ZP domain is found at 43–320 (YCGVQAITMK…PICSHRERRD (278 aa)). Cystine bridges form between C44–C155 and C79–C104. Residue N164 is glycosylated (N-linked (GlcNAc...) asparagine). 2 cysteine pairs are disulfide-bonded: C235-C296 and C255-C313. Residues 323 to 359 (RRTTWSSQSSSGSAVLSAGPIITRSDETPTNNSQLGS) are disordered. A compositionally biased stretch (low complexity) spans 328-339 (SSQSSSGSAVLS). Residues 350–359 (TPTNNSQLGS) are compositionally biased toward polar residues. A helical transmembrane segment spans residues 373 to 393 (ALISGMVILGVMSFSLLVCPL). The Cytoplasmic portion of the chain corresponds to 394–415 (ALLHRKGPTSLVLNGIRNPVFD).

Proteolytically cleaved before the transmembrane segment to yield the secreted form found in the extracellular matrix of the cupula.

It is found in the cytoplasmic vesicle membrane. Its subcellular location is the secreted. The protein localises to the extracellular space. The protein resides in the extracellular matrix. Its function is as follows. Glycoprotein which is a component of the gelatinous extracellular matrix in the cupulae of the vestibular organ. This is Zona pellucida-like domain-containing protein 1 (ZPLD1) from Macaca fascicularis (Crab-eating macaque).